We begin with the raw amino-acid sequence, 224 residues long: Mammalian ependymin-related protein 1 (224 aa).

A signal peptide spans Met1–Gly37. Disulfide bonds link Cys42-Cys172, Cys88-Cys222, and Cys113-Cys210. N-linked (GlcNAc...) asparagine glycosylation is found at Asn130 and Asn182.

The protein belongs to the ependymin family. Homodimer. N-glycosylated; the glycan contains mannose-6-phosphate moieties.

The protein resides in the lysosome lumen. It localises to the secreted. Its function is as follows. Binds anionic lipids and gangliosides at acidic pH. The polypeptide is Mammalian ependymin-related protein 1 (EPDR1) (Macaca fascicularis (Crab-eating macaque)).